We begin with the raw amino-acid sequence, 202 residues long: Glycerol-3-phosphate acyltransferase (202 aa).

The next 6 helical transmembrane spans lie at Asn-3 to Ala-23, Ile-61 to Leu-81, Leu-87 to Phe-107, Gly-118 to Ile-138, Ile-144 to Asn-164, and Leu-167 to Leu-187.

Belongs to the PlsY family. In terms of assembly, probably interacts with PlsX.

It localises to the cell inner membrane. The catalysed reaction is an acyl phosphate + sn-glycerol 3-phosphate = a 1-acyl-sn-glycero-3-phosphate + phosphate. It participates in lipid metabolism; phospholipid metabolism. Catalyzes the transfer of an acyl group from acyl-phosphate (acyl-PO(4)) to glycerol-3-phosphate (G3P) to form lysophosphatidic acid (LPA). This enzyme utilizes acyl-phosphate as fatty acyl donor, but not acyl-CoA or acyl-ACP. This is Glycerol-3-phosphate acyltransferase from Campylobacter jejuni subsp. jejuni serotype O:6 (strain 81116 / NCTC 11828).